A 137-amino-acid chain; its full sequence is UBAP1-MVB12-associated (UMA)-domain containing protein 1 (137 aa).

Positions 1 to 72 (MFHFFRKPPE…VSDPEMENKA (72 aa)) are disordered. Basic and acidic residues predominate over residues 32–44 (DEQRMTARGKTSD). A compositionally biased stretch (polar residues) spans 50–63 (PLETNKENSSSVTV). The UMA domain maps to 86–134 (LSDVPFTLAPHVLAVQGTITDLPDHLLSYDGSENLSRFWYDFTLENSVL).

The sequence is that of UBAP1-MVB12-associated (UMA)-domain containing protein 1 from Homo sapiens (Human).